A 1019-amino-acid polypeptide reads, in one-letter code: Photoactivated adenylate cyclase subunit alpha (1019 aa).

The region spanning 55–148 (LRRLMYLSAS…GRMYGEWHMK (94 aa)) is the BLUF 1 domain. The Guanylate cyclase 1 domain occupies 204-332 (VVTFIYLVEF…DCINTASRIT (129 aa)). In terms of domain architecture, BLUF 2 spans 467-559 (LITLTYISQA…RVYGSPLDMT (93 aa)). A Guanylate cyclase 2 domain is found at 615–744 (VMLATDICSF…EVSARVMEVE (130 aa)). Positions 822 to 861 (GTNAPGRGAPAGGIPSSPKVRPPGRTNSVSSYTPDPNEAL) are disordered. Positions 825-839 (APGRGAPAGGIPSSP) are enriched in low complexity. The span at 846–855 (RTNSVSSYTP) shows a compositional bias: polar residues.

This sequence belongs to the adenylyl cyclase class-4/guanylyl cyclase family. In terms of assembly, heterotetramer of two alpha and two beta subunits. FAD is required as a cofactor.

The protein resides in the cell projection. Its subcellular location is the cilium. It is found in the flagellum. The catalysed reaction is ATP = 3',5'-cyclic AMP + diphosphate. With respect to regulation, activity increased by up to 80-fold under blue light. Functionally, acts as a blue light photoreceptor for the step-up photophobic response. Mediates photoavoidance. The sequence is that of Photoactivated adenylate cyclase subunit alpha from Euglena gracilis.